Here is a 551-residue protein sequence, read N- to C-terminus: Vacuolar protein sorting-associated protein 17 (551 aa).

The tract at residues 1 to 100 is disordered; it reads MTSAVPYDPY…SERVILPERS (100 aa). 2 stretches are compositionally biased toward polar residues: residues 29–39 and 46–64; these read AATTTDGSSSM and TEQT…NIQN. The PX domain maps to 108-227; it reads LLAKVTGLER…FFIESDFNTY (120 aa). Residues 359-385 adopt a coiled-coil conformation; the sequence is IMRNLVQAQQNSKAKQEQARRFRSRRD. A disordered region spans residues 474-504; it reads RLGRHAVSNNNSDTSQTLKGDSWTGESNRKS. Over residues 480 to 504 the composition is skewed to polar residues; the sequence is VSNNNSDTSQTLKGDSWTGESNRKS. Ser544 carries the phosphoserine modification.

The protein belongs to the VPS17 family. Component of the retromer complex which consists of VPS29, VPS26, VPS35, VPS5 and VPS17. Component of a retromer subcomplex consisting of VPS5 and VPS17. In terms of processing, phosphorylated on one or more serine residues.

It localises to the endomembrane system. Its function is as follows. Component of the membrane-associated retromer complex which is essential in endosome-to-Golgi retrograde transport. The VPS5-VPS17 subcomplex may assemble onto the membrane to promote vesicle formation and is required for recycling the vacuolar protein-sorting receptor. Required for the sorting and delivery of a subset of soluble vacuolar hydrolases. Required for retention of late Golgi membrane proteins and vacuolar biogenesis. Involved in vacuolar fragmentation during hyperosmotic stress. This is Vacuolar protein sorting-associated protein 17 from Saccharomyces cerevisiae (strain ATCC 204508 / S288c) (Baker's yeast).